A 136-amino-acid chain; its full sequence is Small ribosomal subunit protein uS9 (136 aa).

Basic and acidic residues predominate over residues 103–116 (PLKTEGHLSRDPRA). Residues 103-136 (PLKTEGHLSRDPRAKERRKYGLKKARKAPQFSKR) are disordered. The segment covering 117–136 (KERRKYGLKKARKAPQFSKR) has biased composition (basic residues).

The protein belongs to the universal ribosomal protein uS9 family.

The polypeptide is Small ribosomal subunit protein uS9 (rpsI) (Prochlorococcus marinus (strain SARG / CCMP1375 / SS120)).